The chain runs to 382 residues: Proton extrusion protein PxcA (382 aa).

The next 4 helical transmembrane spans lie at 156-176 (TLIS…VQQV), 257-277 (AVKN…VCVF), 305-325 (IILF…TVLL), and 340-360 (FILL…KYWI).

It belongs to the CemA family.

It is found in the cell inner membrane. In terms of biological role, required for H(+) efflux immediately after light irradiation to form a rapid H(+) concentration gradient across the thylakoid membranes. Together with PxcL, contributes to transient H(+) uptake following dark to light transition. The protein is Proton extrusion protein PxcA of Synechococcus sp. (strain WH7803).